Consider the following 329-residue polypeptide: 2-oxoglutarate-dependent dioxygenase htyE (329 aa).

A Fe2OG dioxygenase domain is found at 175-289 (NTSELRLLHY…RYSVAYFGKP (115 aa)). Residues His201, Asp203, and His261 each coordinate Fe cation. Residue Arg280 coordinates 2-oxoglutarate.

It belongs to the iron/ascorbate-dependent oxidoreductase family. Fe(2+) serves as cofactor.

The protein operates within antifungal biosynthesis. Functionally, 2-oxoglutarate-dependent dioxygenase; part of the gene cluster that mediates the de novo generation of L-homotyrosine from acetyl-CoA and 4-hydroxyphenyl-pyruvate. L-homotyrosine is a building block of echinocandin B, a fungal lipidated cyclic hexapeptide that acts as an antifungal agent. L-homotyrosine 4-hydroxyphenyl-pyruvate first undergoes an aldol-type condensation by htyA with the C-2 of acetyl-CoA followed by the release of CoA to form 2-(4-hydroxybenzyl)-malate. This is followed by isomerization of 2-(4-hydroxy-benzyl)-malate to 3-(4-hydroxybenzyl)-malate by htyD. Thereafter, 3-(4-hydroxybenzyl)-malate undergoes decarboxylation and oxidation to form 2-oxo-4-(4-hydroxybenzyl)butanoic acid, coupled to reduction of NAD(+) to NADH by htyC. The product then undergoes transamination catalyzed by htyB to form L-homotyrosine. In Aspergillus rugulosus (Emericella rugulosa), this protein is 2-oxoglutarate-dependent dioxygenase htyE.